The primary structure comprises 314 residues: Methionyl-tRNA formyltransferase (314 aa).

111–114 (SLLP) is a (6S)-5,6,7,8-tetrahydrofolate binding site.

Belongs to the Fmt family.

It catalyses the reaction L-methionyl-tRNA(fMet) + (6R)-10-formyltetrahydrofolate = N-formyl-L-methionyl-tRNA(fMet) + (6S)-5,6,7,8-tetrahydrofolate + H(+). Functionally, attaches a formyl group to the free amino group of methionyl-tRNA(fMet). The formyl group appears to play a dual role in the initiator identity of N-formylmethionyl-tRNA by promoting its recognition by IF2 and preventing the misappropriation of this tRNA by the elongation apparatus. This is Methionyl-tRNA formyltransferase from Coxiella burnetii (strain CbuG_Q212) (Coxiella burnetii (strain Q212)).